We begin with the raw amino-acid sequence, 291 residues long: Bis(5'-nucleosyl)-tetraphosphatase, symmetrical (291 aa).

Belongs to the Ap4A hydrolase family.

It carries out the reaction P(1),P(4)-bis(5'-adenosyl) tetraphosphate + H2O = 2 ADP + 2 H(+). In terms of biological role, hydrolyzes diadenosine 5',5'''-P1,P4-tetraphosphate to yield ADP. The polypeptide is Bis(5'-nucleosyl)-tetraphosphatase, symmetrical (Coxiella burnetii (strain CbuK_Q154) (Coxiella burnetii (strain Q154))).